The primary structure comprises 544 residues: NAD(P)H-quinone oxidoreductase chain 4 (544 aa).

14 helical membrane-spanning segments follow: residues 29 to 49, 60 to 80, 115 to 135, 139 to 159, 161 to 181, 193 to 213, 234 to 254, 268 to 288, 302 to 322, 339 to 359, 360 to 380, 400 to 422, 442 to 462, and 488 to 508; these read FPWL…IPLV, WYAL…YLNG, LILL…PVTF, LFFF…AVQD, LLFF…LAIW, FILY…AMAF, GFQA…LPIV, TAPV…YALF, FAPL…LTSF, MGFV…GAML, QMIS…ATYD, MFAM…GFVS, IVID…LLSM, and IYII…PKLV.

It belongs to the complex I subunit 4 family.

It is found in the cellular thylakoid membrane. The catalysed reaction is a plastoquinone + NADH + (n+1) H(+)(in) = a plastoquinol + NAD(+) + n H(+)(out). It carries out the reaction a plastoquinone + NADPH + (n+1) H(+)(in) = a plastoquinol + NADP(+) + n H(+)(out). Functionally, NDH-1 shuttles electrons from NAD(P)H, via FMN and iron-sulfur (Fe-S) centers, to quinones in the respiratory chain. The immediate electron acceptor for the enzyme in this species is believed to be plastoquinone. Couples the redox reaction to proton translocation (for every two electrons transferred, four hydrogen ions are translocated across the cytoplasmic membrane), and thus conserves the redox energy in a proton gradient. The chain is NAD(P)H-quinone oxidoreductase chain 4 from Synechococcus sp. (strain RCC307).